A 141-amino-acid chain; its full sequence is Granulocyte-macrophage colony-stimulating factor (141 aa).

The N-terminal stretch at 1–17 (MWLQNLLFLGIVVYSLS) is a signal peptide. The O-linked (GalNAc...) serine glycan is linked to serine 22. Residue threonine 27 is glycosylated (O-linked (GalNAc...) threonine). 2 cysteine pairs are disulfide-bonded: cysteine 68–cysteine 110 and cysteine 102–cysteine 135. Asparagine 83 and asparagine 92 each carry an N-linked (GlcNAc...) asparagine glycan.

Belongs to the GM-CSF family. Monomer. The signaling GM-CSF receptor complex is a dodecamer of two head-to-head hexamers of two alpha, two beta, and two ligand subunits.

It localises to the secreted. Its function is as follows. Cytokine that stimulates the growth and differentiation of hematopoietic precursor cells from various lineages, including granulocytes, macrophages, eosinophils and erythrocytes. The chain is Granulocyte-macrophage colony-stimulating factor (Csf2) from Mus musculus (Mouse).